Consider the following 277-residue polypeptide: Caspase-3 (277 aa).

The residue at position 1 (Met-1) is an N-acetylmethionine. 2 consecutive propeptides follow at residues 1–9 (MENNKTSVD) and 10–28 (SKSI…KSVD). Lys-11 is modified (N6-acetyllysine). Ser-26 carries the post-translational modification Phosphoserine. Catalysis depends on residues His-121 and Cys-163. Position 163 is an S-nitrosocysteine; in inhibited form (Cys-163).

This sequence belongs to the peptidase C14A family. As to quaternary structure, heterotetramer that consists of two anti-parallel arranged heterodimers, each one formed by a 17 kDa (p17) and a 12 kDa (p12) subunit. Interacts with BIRC6/bruce. Cleavage by granzyme B, caspase-6, caspase-8 and caspase-10 generates the two active subunits. Additional processing of the propeptides is likely due to the autocatalytic activity of the activated protease. Active heterodimers between the small subunit of caspase-7 protease and the large subunit of caspase-3 also occur and vice versa. In terms of processing, S-nitrosylated on its catalytic site cysteine in unstimulated cell lines and denitrosylated upon activation of the Fas apoptotic pathway, associated with an increase in intracellular caspase activity. Fas therefore activates caspase-3 not only by inducing the cleavage of the caspase zymogen to its active subunits, but also by stimulating the denitrosylation of its active site thiol. Post-translationally, ubiquitinated by BIRC6; this activity is inhibited by DIABLO/SMAC. In terms of tissue distribution, highest expression in spleen, lung, liver, kidney and heart. Lower expression in brain, skeletal muscle and testis.

It is found in the cytoplasm. It carries out the reaction Strict requirement for an Asp residue at positions P1 and P4. It has a preferred cleavage sequence of Asp-Xaa-Xaa-Asp-|- with a hydrophobic amino-acid residue at P2 and a hydrophilic amino-acid residue at P3, although Val or Ala are also accepted at this position.. Inhibited by BIRC6; following inhibition of BIRC6-caspase binding by DIABLO/SMAC, BIRC6 is subjected to caspase cleavage, leading to an increase in active caspases. In terms of biological role, thiol protease that acts as a major effector caspase involved in the execution phase of apoptosis. Following cleavage and activation by initiator caspases (CASP8, CASP9 and/or CASP10), mediates execution of apoptosis by catalyzing cleavage of many proteins. At the onset of apoptosis, it proteolytically cleaves poly(ADP-ribose) polymerase PARP1 at a '216-Asp-|-Gly-217' bond. Cleaves and activates sterol regulatory element binding proteins (SREBPs) between the basic helix-loop-helix leucine zipper domain and the membrane attachment domain. Cleaves and activates caspase-6, -7 and -9 (CASP6, CASP7 and CASP9, respectively). Cleaves and inactivates interleukin-18 (IL18). Triggers cell adhesion in sympathetic neurons through RET cleavage. Cleaves IL-1 beta between an Asp and an Ala, releasing the mature cytokine which is involved in a variety of inflammatory processes. Cleaves and inhibits serine/threonine-protein kinase AKT1 in response to oxidative stress. Acts as an inhibitor of type I interferon production during virus-induced apoptosis by mediating cleavage of antiviral proteins CGAS, IRF3 and MAVS, thereby preventing cytokine overproduction. Also involved in pyroptosis by mediating cleavage and activation of gasdermin-E (GSDME). Cleaves XRCC4 and phospholipid scramblase proteins XKR4, XKR8 and XKR9, leading to promote phosphatidylserine exposure on apoptotic cell surface. Cleaves BIRC6 following inhibition of BIRC6-caspase binding by DIABLO/SMAC. The polypeptide is Caspase-3 (Casp3) (Mus musculus (Mouse)).